Here is a 238-residue protein sequence, read N- to C-terminus: Serine protease SplE (238 aa).

An N-terminal signal peptide occupies residues 1 to 36 (MNKNIIIKSIAALTILTSVTGVGTTMVEGIQQTAKA). Active-site charge relay system residues include histidine 75, aspartate 113, and serine 191.

The protein belongs to the peptidase S1B family.

The protein resides in the secreted. In Staphylococcus aureus, this protein is Serine protease SplE (splE).